The following is a 131-amino-acid chain: UPF0102 protein YraN (131 aa).

Over residues 1-19 the composition is skewed to polar residues; that stretch reads MATVPTRSGSPRQLTTKQT. The disordered stretch occupies residues 1–21; it reads MATVPTRSGSPRQLTTKQTGD.

This sequence belongs to the UPF0102 family.

This Escherichia coli O7:K1 (strain IAI39 / ExPEC) protein is UPF0102 protein YraN.